The chain runs to 480 residues: NADH-quinone oxidoreductase subunit N (480 aa).

The next 13 helical transmembrane spans lie at 11-31, 38-58, 74-94, 109-129, 163-183, 200-220, 239-259, 273-293, 301-321, 329-349, 372-392, 405-425, and 451-471; these read VIPE…DLFV, ITYG…IALA, GLSD…FLYS, YVLG…YSFL, FILG…LYGI, GAGL…GLAF, PTSV…AIIM, WQGM…VVAI, MLAY…LAGT, LFYT…IILL, FAFI…TVGF, VEMI…AFYY, and VVLS…GLLM.

Belongs to the complex I subunit 2 family. As to quaternary structure, NDH-1 is composed of 14 different subunits. Subunits NuoA, H, J, K, L, M, N constitute the membrane sector of the complex.

It localises to the cell inner membrane. It carries out the reaction a quinone + NADH + 5 H(+)(in) = a quinol + NAD(+) + 4 H(+)(out). Functionally, NDH-1 shuttles electrons from NADH, via FMN and iron-sulfur (Fe-S) centers, to quinones in the respiratory chain. The immediate electron acceptor for the enzyme in this species is believed to be ubiquinone. Couples the redox reaction to proton translocation (for every two electrons transferred, four hydrogen ions are translocated across the cytoplasmic membrane), and thus conserves the redox energy in a proton gradient. In Thioalkalivibrio sulfidiphilus (strain HL-EbGR7), this protein is NADH-quinone oxidoreductase subunit N.